The chain runs to 159 residues: U1 small nuclear ribonucleoprotein C (159 aa).

The Matrin-type zinc-finger motif lies at 4–36; that stretch reads FYCDYCDTYLTHDSPSVRKTHCSGRKHKENVKD. The tract at residues 61–99 is disordered; the sequence is KIPPTPFPGAPPPGGSLLPHPSIGGPPRPGMLPAPPMGG. 2 stretches are compositionally biased toward pro residues: residues 63 to 74 and 84 to 99; these read PPTPFPGAPPPG and GGPP…PMGG.

This sequence belongs to the U1 small nuclear ribonucleoprotein C family. As to quaternary structure, component of the U1 snRNP. The U1 snRNP is composed of the U1 snRNA and the 7 core Sm proteins snrpb, snrpd1, snrpd2, snrpd3, snrpe, snrpf and snrpg that assemble in a heptameric protein ring on the Sm site of the small nuclear RNA to form the core snRNP, and at least 3 U1 snRNP-specific proteins snrnp70/U1-70K, snrpa/U1-A and snrpc/U1-C. snrpc/U1-C interacts with U1 snRNA and the 5' splice-site region of the pre-mRNA.

The protein resides in the nucleus. Its function is as follows. Component of the spliceosomal U1 snRNP, which is essential for recognition of the pre-mRNA 5' splice-site and the subsequent assembly of the spliceosome. snrpc/U1-C is directly involved in initial 5' splice-site recognition for both constitutive and regulated alternative splicing. The interaction with the 5' splice-site seems to precede base-pairing between the pre-mRNA and the U1 snRNA. Stimulates commitment or early (E) complex formation by stabilizing the base pairing of the 5' end of the U1 snRNA and the 5' splice-site region. This Danio rerio (Zebrafish) protein is U1 small nuclear ribonucleoprotein C.